The following is a 386-amino-acid chain: N-terminal EF-hand calcium-binding protein 2 (386 aa).

Arginine 10 carries the omega-N-methylarginine modification. Arginine 42 carries the asymmetric dimethylarginine modification. EF-hand domains follow at residues 60 to 95 and 96 to 129; these read GGTA…GVLN and EKEL…HMGD. Residues aspartate 73, asparagine 75, aspartate 77, lysine 79, glutamate 84, aspartate 107, aspartate 109, threonine 111, histidine 113, and glutamate 118 each coordinate Ca(2+). A coiled-coil region spans residues 170-201; that stretch reads LKETANQIQSLLSSVESAVEAIEEQTSQLRQN. The region spanning 286–375 is the ABM domain; the sequence is QLVRQEMAVC…SQPEALSRIL (90 aa).

As to quaternary structure, interacts (calcium-dependent) with ADORA2A and GRM5. Expressed in brain. Expressed in the spinal dorsal horn with especially strong expression in lamina IIi; found in excitory synaptic boutons and in ependymal cells (at protein level).

The protein resides in the cytoplasm. The protein localises to the cell projection. It localises to the dendrite. It is found in the axon. Its subcellular location is the cell membrane. In terms of biological role, may act as a signaling scaffold protein that senses intracellular calcium. Can modulate ligand-induced internalization of ADORA2A and coupling efficiency of mGluR5/GRM5; for both receptors may regulate signaling activity such as promoting MAPK1/3 (ERK1/2) activation. The chain is N-terminal EF-hand calcium-binding protein 2 (NECAB2) from Homo sapiens (Human).